Reading from the N-terminus, the 365-residue chain is Mannose-1-phosphate guanylyltransferase catalytic subunit beta (365 aa).

A substrate-binding domain region spans residues 2 to 221; the sequence is KALILVGGYG…PGFWMDVGQP (220 aa). A GDP-alpha-D-mannose-binding site is contributed by Asp-109. Asp-109 contacts Mg(2+). The active site involves Lys-161. Asp-217 is a binding site for GDP-alpha-D-mannose. Asp-217 contributes to the Mg(2+) binding site. The hexapeptide repeat domain stretch occupies residues 244–365; that stretch reads ETGSNIHPTA…VNVPSKDIIM (122 aa).

The protein belongs to the transferase hexapeptide repeat family. In terms of assembly, component of the GMPPA-GMPPB mannose-1-phosphate guanylyltransferase complex composed of 4 GMPPA subunits and 8 tag-335/GMPPB subunits; the complex is organized into three layers, a central layer made up of 2 GMPPA dimers sandwiched between two layers each made up of 2 tag-335/GMPPB dimers. Catalytic activity of tag-335/GMPPB is reduced when part of the complex and binding of GDP-alpha-D-Mannose by GMPPA induces allosteric feedback inhibition of tag-335/GMPPB. Requires Mg(2+) as cofactor.

The enzyme catalyses alpha-D-mannose 1-phosphate + GTP + H(+) = GDP-alpha-D-mannose + diphosphate. It participates in nucleotide-sugar biosynthesis; GDP-alpha-D-mannose biosynthesis; GDP-alpha-D-mannose from alpha-D-mannose 1-phosphate (GTP route): step 1/1. Its activity is regulated as follows. Enzyme activity is reduced by incorporation into the GMPPA-GMPPB mannose-1-phosphate guanylyltransferase complex. Allosterically inhibited, when part of the GMPPA-GMPPB complex, by GDP-alpha-D-mannose binding to GMPPA. In terms of biological role, catalytic subunit of the GMPPA-GMPPB mannose-1-phosphate guanylyltransferase complex. Catalyzes the formation of GDP-mannose, an essential precursor of glycan moieties of glycoproteins and glycolipids. Can catalyze the reverse reaction in vitro. Together with GMPPA regulates GDP-alpha-D-mannose levels. The polypeptide is Mannose-1-phosphate guanylyltransferase catalytic subunit beta (tag-335) (Caenorhabditis elegans).